The chain runs to 804 residues: MYNHKVVEKKWQKYWLENKTFKTGTDPEKPKYYVLDMFPYPSGKGLHVGHPEGYTATDIMARMKRAQGYNVLHPMGWDAFGLPAEQYALQTGNDPATFTDENIAHFKKQLQALGFSYDWDREIKTTDPNYYKWTQWIFEQMYKMGLAYEAEVPVNWSPDLGTVVANEEVIDGKTERGGYPVYRRKMRQWMLKITAYADRLLDDLDDLDWPEPIKEMQRNWIGRSVGAQVTFKIKDSDKSFAVFTTRPDTLFGCSYTVLAPENELVKEITSPEQKEAVDAYIKSIESKSDLERTDLNKDKTGVFTGAYAINPVNGEEVPVWISDYVLATYGTGAVMAVPAHDERDYAFATKFDLPIKEVVEGGDISKEAFAGDGVHVNSDFLNGLHNEEAKAKMVDWLTEKGVGEKKVNYKMRDWNFSRQRYWGEPIPVIHWEDGETTLVPEDELPLRLPKESNIKPSGTPESPLANLTDWVNVVDENGRKGKRETNTMPQWAGSSWYFLRYIDPHNDKALADPELLKKWMPVDLYIGGAEHATLHLLYARFWHKVLYDLGVVPTKEPFQKLYNQGLILKNHEKMSKSRGNVVNPDDVVDEYGADSLRTYEMFMGPLNASIDWDDNGPSGVKKFLDRVWRTFVNDLDLDPIPSEKITDKNDGKLDKIYNETVKTVTEHFEELRFNTAISQMMVFMNACQKVDKIPREYAEGFVKLMAPVAPHMMEEIWHVFGHDESVQFAAWPTYDASKLVESTVEMAVTVNGKKRGNFQIAKDASREEAQAAATALTHVKEFLEGKEIKKVIVVPNKIVNIVAK.

Positions 39–50 match the 'HIGH' region motif; the sequence is PYPSGKGLHVGH. The short motif at 573-577 is the 'KMSKS' region element; that stretch reads KMSKS. Residue lysine 576 participates in ATP binding.

It belongs to the class-I aminoacyl-tRNA synthetase family.

It localises to the cytoplasm. The enzyme catalyses tRNA(Leu) + L-leucine + ATP = L-leucyl-tRNA(Leu) + AMP + diphosphate. This is Leucine--tRNA ligase from Lactobacillus delbrueckii subsp. bulgaricus (strain ATCC 11842 / DSM 20081 / BCRC 10696 / JCM 1002 / NBRC 13953 / NCIMB 11778 / NCTC 12712 / WDCM 00102 / Lb 14).